An 89-amino-acid chain; its full sequence is Small ribosomal subunit protein uS15 (89 aa).

The segment covering 1 to 10 has biased composition (basic and acidic residues); that stretch reads MSITAERKAE. The tract at residues 1 to 24 is disordered; it reads MSITAERKAEVIQGNANKAGDTGS.

It belongs to the universal ribosomal protein uS15 family. In terms of assembly, part of the 30S ribosomal subunit. Forms a bridge to the 50S subunit in the 70S ribosome, contacting the 23S rRNA.

In terms of biological role, one of the primary rRNA binding proteins, it binds directly to 16S rRNA where it helps nucleate assembly of the platform of the 30S subunit by binding and bridging several RNA helices of the 16S rRNA. Its function is as follows. Forms an intersubunit bridge (bridge B4) with the 23S rRNA of the 50S subunit in the ribosome. This is Small ribosomal subunit protein uS15 from Rhodopseudomonas palustris (strain HaA2).